The sequence spans 260 residues: HTH-type transcriptional repressor NanR (260 aa).

The HTH gntR-type domain maps to 27–95 (KKLSEMVEEE…NGERARVSRP (69 aa)). Positions 55-74 (ERELMAFFNVGRPSVREALA) form a DNA-binding region, H-T-H motif.

Belongs to the NanR family.

In terms of biological role, transcriptional repressor that controls expression of the genes required for the catabolism of sialic acids. This chain is HTH-type transcriptional repressor NanR, found in Citrobacter rodentium (strain ICC168) (Citrobacter freundii biotype 4280).